The following is a 130-amino-acid chain: Protein YchQ (130 aa).

At 1 to 9 (MTSFSTLLS) the chain is on the periplasmic side. A helical transmembrane segment spans residues 10-28 (VHLISIALSVGLLTLRFWL). The Cytoplasmic portion of the chain corresponds to 29 to 39 (RYQKHPQAFAR). The chain crosses the membrane as a helical span at residues 40 to 59 (WTRIVPPVVDTLLLLSGIAL). Residues 60-73 (MAKAHILPFSGQAQ) are Periplasmic-facing. A helical transmembrane segment spans residues 74 to 93 (WLTEKLFGVIIYIVLGFIAL). At 94–104 (DYRRMHSQQAR) the chain is on the cytoplasmic side. The helical transmembrane segment at 105–124 (IIAFPLALVVLYIIIKLATT) threads the bilayer. Topologically, residues 125–130 (KVPLLG) are periplasmic.

This sequence belongs to the SirB2 family.

It is found in the cell inner membrane. The chain is Protein YchQ (ychQ) from Escherichia coli (strain K12).